Here is a 285-residue protein sequence, read N- to C-terminus: Mitochondrial substrate carrier family protein S (285 aa).

The Mitochondrial intermembrane segment spans residues 1–9 (MSTERGLKD). 3 Solcar repeats span residues 4 to 87 (ERGL…MKVL), 96 to 183 (LTVG…CKRY), and 197 to 283 (LNLP…VIKL). The helical transmembrane segment at 10–30 (SIAGTVAGAACLFTGHPFDTI) threads the bilayer. Residues 31–61 (RVRLQTSNTPIGIMECFRNTIKYEGFSGLYK) are Mitochondrial matrix-facing. Residues 62-82 (GVTSPLFGMMFETAVLFAGYG) form a helical membrane-spanning segment. The Mitochondrial intermembrane segment spans residues 83 to 101 (QMKVLLQKDENTPLTVGQC). Residues 102-122 (AIAGGFAGVGASVVLTPVELV) form a helical membrane-spanning segment. Residues 123 to 150 (KCRLQVQTTGPQKYKGSLDCLVQILKEG) lie on the Mitochondrial matrix side of the membrane. Residues 151 to 172 (GIRGAYRGFTPTIAREFVGNMA) traverse the membrane as a helical segment. Topologically, residues 173–199 (FFSTYETCKRYFKNKENKPNDDDELNL) are mitochondrial intermembrane. The chain crosses the membrane as a helical span at residues 200-220 (PALIISGGLGGMAYWTVLYPV). Residues 221–258 (DVAKSKIQISEGAGPSPSIVKVLKEIYSKEGVKGLFRG) are Mitochondrial matrix-facing. Residues 259–277 (YTPTIIRSFPANAAMFSVY) traverse the membrane as a helical segment. Topologically, residues 278–285 (ELVIKLLG) are mitochondrial intermembrane.

The protein belongs to the mitochondrial carrier (TC 2.A.29) family.

It is found in the mitochondrion inner membrane. In terms of biological role, mitochondrial solute carriers shuttle metabolites, nucleotides, and cofactors through the mitochondrial inner membrane. Mediates the transport of acylcarnitines of different length across the mitochondrial inner membrane from the cytosol to the mitochondrial matrix for their oxidation by the mitochondrial fatty acid-oxidation pathway. This is Mitochondrial substrate carrier family protein S (mcfS) from Dictyostelium discoideum (Social amoeba).